The following is a 203-amino-acid chain: dITP/XTP pyrophosphatase (203 aa).

8 to 13 (TANKGK) contributes to the substrate binding site. Mg(2+)-binding residues include Glu-41 and Asp-70. Asp-70 serves as the catalytic Proton acceptor. Substrate-binding positions include Ser-71, 153–156 (FGYD), Lys-176, and 181–182 (HR).

This sequence belongs to the HAM1 NTPase family. As to quaternary structure, homodimer. It depends on Mg(2+) as a cofactor.

The enzyme catalyses XTP + H2O = XMP + diphosphate + H(+). It catalyses the reaction dITP + H2O = dIMP + diphosphate + H(+). The catalysed reaction is ITP + H2O = IMP + diphosphate + H(+). Functionally, pyrophosphatase that catalyzes the hydrolysis of nucleoside triphosphates to their monophosphate derivatives, with a high preference for the non-canonical purine nucleotides XTP (xanthosine triphosphate), dITP (deoxyinosine triphosphate) and ITP. Seems to function as a house-cleaning enzyme that removes non-canonical purine nucleotides from the nucleotide pool, thus preventing their incorporation into DNA/RNA and avoiding chromosomal lesions. The chain is dITP/XTP pyrophosphatase from Listeria monocytogenes serovar 1/2a (strain ATCC BAA-679 / EGD-e).